A 259-amino-acid chain; its full sequence is 2-oxoglutaramate amidase (259 aa).

In terms of domain architecture, CN hydrolase spans W3–L238. E42 acts as the Proton acceptor in catalysis. K111 (proton donor) is an active-site residue. C145 acts as the Nucleophile in catalysis.

It belongs to the carbon-nitrogen hydrolase superfamily. NIT1/NIT2 family.

The catalysed reaction is 2-oxoglutaramate + H2O = 2-oxoglutarate + NH4(+). Functionally, involved in the methylthioribose (MTR) recycling pathway. Probably catalyzes the conversion of 2-oxoglutaramate to 2-oxoglutarate. The polypeptide is 2-oxoglutaramate amidase (Bacillus subtilis (strain 168)).